We begin with the raw amino-acid sequence, 126 residues long: Large ribosomal subunit protein bL19 (126 aa).

Belongs to the bacterial ribosomal protein bL19 family.

Its function is as follows. This protein is located at the 30S-50S ribosomal subunit interface and may play a role in the structure and function of the aminoacyl-tRNA binding site. In Albidiferax ferrireducens (strain ATCC BAA-621 / DSM 15236 / T118) (Rhodoferax ferrireducens), this protein is Large ribosomal subunit protein bL19.